Reading from the N-terminus, the 405-residue chain is Chorismate synthase (405 aa).

The NADP(+) site is built by arginine 43 and arginine 49. FMN contacts are provided by residues arginine 138 to serine 140 and glutamine 259 to alanine 260. Residues arginine 275–proline 286 are compositionally biased toward basic and acidic residues. Positions arginine 275–glycine 308 are disordered. FMN-binding positions include glycine 303, lysine 318 to threonine 322, and arginine 344.

Belongs to the chorismate synthase family. In terms of assembly, homotetramer. Requires FMNH2 as cofactor.

The catalysed reaction is 5-O-(1-carboxyvinyl)-3-phosphoshikimate = chorismate + phosphate. It participates in metabolic intermediate biosynthesis; chorismate biosynthesis; chorismate from D-erythrose 4-phosphate and phosphoenolpyruvate: step 7/7. In terms of biological role, catalyzes the anti-1,4-elimination of the C-3 phosphate and the C-6 proR hydrogen from 5-enolpyruvylshikimate-3-phosphate (EPSP) to yield chorismate, which is the branch point compound that serves as the starting substrate for the three terminal pathways of aromatic amino acid biosynthesis. This reaction introduces a second double bond into the aromatic ring system. This chain is Chorismate synthase, found in Nocardia farcinica (strain IFM 10152).